A 62-amino-acid chain; its full sequence is Flavodoxin (62 aa).

Residues 4–62 (IGIFFGTDTGKTRKIAKMIHKQLGELADAPVNINRTTLDDFMAYPVLLLGTPTLGDGQL) form the Flavodoxin-like domain.

This sequence belongs to the flavodoxin family. FMN is required as a cofactor.

In terms of biological role, low-potential electron donor to a number of redox enzymes. NifF is the electron donor to nitrogenase. In Klebsiella oxytoca, this protein is Flavodoxin (nifF).